The sequence spans 88 residues: MSRVIHISSNEELDKHLQAERLVIDFSAAWCGPCRAISPVFEKLSNEFVTFTFVHVDIDKLSGHPIVKEIRSVPTFYFYRNGAKVSEF.

One can recognise a Thioredoxin domain in the interval 2-88 (SRVIHISSNE…YRNGAKVSEF (87 aa)). Catalysis depends on nucleophile residues C31 and C34. Cysteines 31 and 34 form a disulfide.

This sequence belongs to the thioredoxin family.

In terms of biological role, participates in various redox reactions through the reversible oxidation of its active center dithiol to a disulfide and catalyzes dithiol-disulfide exchange reactions. This chain is Thioredoxin-2 (trxB), found in Dictyostelium discoideum (Social amoeba).